Here is a 152-residue protein sequence, read N- to C-terminus: Adrenodoxin-like protein 2, mitochondrial (152 aa).

A mitochondrion-targeting transit peptide spans 1–29 (MLVINSCRAASRLALRSLNLRSPIATRTF). Residues 41–146 (VNITFVRANG…GLEVHVPSTI (106 aa)) enclose the 2Fe-2S ferredoxin-type domain. [2Fe-2S] cluster contacts are provided by cysteine 80, cysteine 86, cysteine 89, and cysteine 127.

Belongs to the adrenodoxin/putidaredoxin family. [2Fe-2S] cluster is required as a cofactor.

The protein localises to the mitochondrion. Its function is as follows. Required for ecdysteroidogenesis in the prothoracic gland which is necessary for larval to pupal transition. This is Adrenodoxin-like protein 2, mitochondrial from Drosophila melanogaster (Fruit fly).